A 186-amino-acid chain; its full sequence is Large ribosomal subunit protein uL5 (186 aa).

Belongs to the universal ribosomal protein uL5 family. Part of the 50S ribosomal subunit; contacts the 5S rRNA and probably tRNA. Forms a bridge to the 30S subunit in the 70S ribosome.

Its function is as follows. This is one of the proteins that bind and probably mediate the attachment of the 5S RNA into the large ribosomal subunit, where it forms part of the central protuberance. In the 70S ribosome it contacts protein S13 of the 30S subunit (bridge B1b), connecting the 2 subunits; this bridge is implicated in subunit movement. May contact the P site tRNA; the 5S rRNA and some of its associated proteins might help stabilize positioning of ribosome-bound tRNAs. This is Large ribosomal subunit protein uL5 from Methanopyrus kandleri (strain AV19 / DSM 6324 / JCM 9639 / NBRC 100938).